The chain runs to 174 residues: Probable calcium-binding protein CML20 (174 aa).

A lipid anchor (N-myristoyl glycine) is attached at Gly-2. A disordered region spans residues 14–35; the sequence is LRRSRSRSPPPAVLDPSQSPLS. EF-hand domains are found at residues 39–74, 75–100, 102–137, and 141–174; these read EAEPELIRVFRCFDTDGDGLISAAEMREFYGCSVDE, AEEMVAAADRDGDGFVSIEELRAVME, GGLDALRAAFDEYDEDGNGVITAEELRRALRRLNLD, and LTAEQCAEIVAAVDSDGDGVISFDEFKAMMSKQA. Ca(2+) contacts are provided by Asp-52, Asp-54, Asp-56, Glu-63, Asp-83, Asp-85, Asp-87, Glu-94, Asp-115, Asp-117, Asn-119, Glu-126, Asp-154, Asp-156, Asp-158, and Glu-165.

Its function is as follows. Potential calcium sensor. The chain is Probable calcium-binding protein CML20 (CML20) from Oryza sativa subsp. japonica (Rice).